A 427-amino-acid polypeptide reads, in one-letter code: Putative dipeptidase MCYG_02918 (427 aa).

A signal peptide spans 1-29 (MAPERRSRLSDAGILVSLLALTSLVPVQA). Residues histidine 55, aspartate 57, and glutamate 167 each coordinate Zn(2+). Cysteine 106 and cysteine 196 are joined by a disulfide. Residue histidine 194 coordinates substrate. Zn(2+)-binding residues include histidine 238 and histidine 259. Substrate contacts are provided by arginine 270 and aspartate 330. Asparagine 402 is a glycosylation site (N-linked (GlcNAc...) asparagine).

It belongs to the metallo-dependent hydrolases superfamily. Peptidase M19 family. Zn(2+) serves as cofactor.

The enzyme catalyses an L-aminoacyl-L-amino acid + H2O = 2 an L-alpha-amino acid. Hydrolyzes a wide range of dipeptides. The protein is Putative dipeptidase MCYG_02918 of Arthroderma otae (strain ATCC MYA-4605 / CBS 113480) (Microsporum canis).